We begin with the raw amino-acid sequence, 247 residues long: 3-oxoacyl-[acyl-carrier-protein] reductase (247 aa).

An NADP(+)-binding site is contributed by 11-35 (VTGASRGIGKATALALAATGMKVVV). Substrate is bound at residue Ser-143. The active-site Proton acceptor is the Tyr-156.

This sequence belongs to the short-chain dehydrogenases/reductases (SDR) family.

It catalyses the reaction a (3R)-hydroxyacyl-[ACP] + NADP(+) = a 3-oxoacyl-[ACP] + NADPH + H(+). It functions in the pathway lipid metabolism; fatty acid biosynthesis. In terms of biological role, catalyzes the NADPH-dependent reduction of beta-ketoacyl-ACP substrates to beta-hydroxyacyl-ACP products, the first reductive step in the elongation cycle of fatty acid biosynthesis. Is capable of reducing acetoacetyl-CoA, but less well than its paralog PhaB. The polypeptide is 3-oxoacyl-[acyl-carrier-protein] reductase (fabG) (Synechocystis sp. (strain ATCC 27184 / PCC 6803 / Kazusa)).